We begin with the raw amino-acid sequence, 72 residues long: MRPVVSTGKAWCCTVLSAFGVVILSVIAHLFNTNHESFVGSINDPEDGPAYVIFSYLFRRYPFTISYISPPY.

A helical membrane pass occupies residues 11–31; it reads WCCTVLSAFGVVILSVIAHLF.

Its subcellular location is the membrane. This is an uncharacterized protein from Saccharomyces cerevisiae (strain ATCC 204508 / S288c) (Baker's yeast).